The following is a 275-amino-acid chain: Translation initiation factor 2 subunit alpha (275 aa).

One can recognise an S1 motif domain in the interval 12–83 (GEFVVATVKN…EKGHIDLSLK (72 aa)).

It belongs to the eIF-2-alpha family. As to quaternary structure, heterotrimer composed of an alpha, a beta and a gamma chain.

Functionally, eIF-2 functions in the early steps of protein synthesis by forming a ternary complex with GTP and initiator tRNA. In Thermococcus kodakarensis (strain ATCC BAA-918 / JCM 12380 / KOD1) (Pyrococcus kodakaraensis (strain KOD1)), this protein is Translation initiation factor 2 subunit alpha.